Consider the following 359-residue polypeptide: Transcription factor bHLH130 (359 aa).

Ser-60 carries the phosphoserine modification. The segment at 161–186 (EEDEESPSNSNGLRRHCSLSSRPPSS) is disordered. Residues 167-184 (PSNSNGLRRHCSLSSRPP) show a composition bias toward polar residues. The region spanning 285 to 335 (CATHPRSIAERVRRTRISERMRKLQELVPNMDKQTNTSDMLDLAVDYIKDL) is the bHLH domain.

As to quaternary structure, homodimer.

The protein localises to the nucleus. This chain is Transcription factor bHLH130 (BHLH130), found in Arabidopsis thaliana (Mouse-ear cress).